Consider the following 401-residue polypeptide: Imidazolonepropionase (401 aa).

Fe(3+)-binding residues include H70 and H72. The Zn(2+) site is built by H70 and H72. 4-imidazolone-5-propanoate contacts are provided by R79, Y142, and H175. Y142 is a binding site for N-formimidoyl-L-glutamate. Residue H240 participates in Fe(3+) binding. H240 is a Zn(2+) binding site. Position 243 (Q243) interacts with 4-imidazolone-5-propanoate. Residue D315 coordinates Fe(3+). A Zn(2+)-binding site is contributed by D315. Residues N317 and G319 each coordinate N-formimidoyl-L-glutamate. S320 contacts 4-imidazolone-5-propanoate.

It belongs to the metallo-dependent hydrolases superfamily. HutI family. It depends on Zn(2+) as a cofactor. The cofactor is Fe(3+).

It is found in the cytoplasm. The catalysed reaction is 4-imidazolone-5-propanoate + H2O = N-formimidoyl-L-glutamate. It participates in amino-acid degradation; L-histidine degradation into L-glutamate; N-formimidoyl-L-glutamate from L-histidine: step 3/3. In terms of biological role, catalyzes the hydrolytic cleavage of the carbon-nitrogen bond in imidazolone-5-propanoate to yield N-formimidoyl-L-glutamate. It is the third step in the universal histidine degradation pathway. This is Imidazolonepropionase from Ruegeria pomeroyi (strain ATCC 700808 / DSM 15171 / DSS-3) (Silicibacter pomeroyi).